The chain runs to 114 residues: Ribosome-binding factor A (114 aa).

Belongs to the RbfA family. As to quaternary structure, monomer. Binds 30S ribosomal subunits, but not 50S ribosomal subunits or 70S ribosomes.

The protein localises to the cytoplasm. Functionally, one of several proteins that assist in the late maturation steps of the functional core of the 30S ribosomal subunit. Associates with free 30S ribosomal subunits (but not with 30S subunits that are part of 70S ribosomes or polysomes). Required for efficient processing of 16S rRNA. May interact with the 5'-terminal helix region of 16S rRNA. The sequence is that of Ribosome-binding factor A from Listeria welshimeri serovar 6b (strain ATCC 35897 / DSM 20650 / CCUG 15529 / CIP 8149 / NCTC 11857 / SLCC 5334 / V8).